Here is a 271-residue protein sequence, read N- to C-terminus: Glutamate racemase (271 aa).

Substrate is bound by residues 10 to 11 (DS) and 42 to 43 (YG). Cys73 functions as the Proton donor/acceptor in the catalytic mechanism. 74–75 (NT) contacts substrate. Cys183 functions as the Proton donor/acceptor in the catalytic mechanism. 184 to 185 (TH) lines the substrate pocket.

This sequence belongs to the aspartate/glutamate racemases family.

It catalyses the reaction L-glutamate = D-glutamate. It functions in the pathway cell wall biogenesis; peptidoglycan biosynthesis. Its function is as follows. Provides the (R)-glutamate required for cell wall biosynthesis. The chain is Glutamate racemase from Streptococcus thermophilus (strain ATCC BAA-250 / LMG 18311).